The following is an 88-amino-acid chain: uncharacterized protein (88 aa).

This is an uncharacterized protein from Bacillus subtilis (strain 168).